Reading from the N-terminus, the 152-residue chain is Interleukin-1 family member 10 (152 aa).

This sequence belongs to the IL-1 family. As to quaternary structure, interacts with cargo receptor TMED10; the interaction mediates the translocation from the cytoplasm into the ERGIC (endoplasmic reticulum-Golgi intermediate compartment) and thereby secretion.

It is found in the cytoplasm. The protein resides in the endoplasmic reticulum-Golgi intermediate compartment. It localises to the secreted. Its function is as follows. Cytokine with immunomodulatory activity. Alone, does not induce cytokine production, but reduces IL22 and IL17A production by T-cells in response to heat-killed Candida albicans. Reduces IL36G-induced production of IL8 by peripheral blood mononuclear cells. Increases IL6 production by dendritic cells stimulated by bacterial lipopolysaccharides (LPS). Ligand for IL-36R/IL1RL2. In Mus musculus (Mouse), this protein is Interleukin-1 family member 10 (Il1f10).